The sequence spans 1584 residues: Cilia- and flagella-associated protein 74 (1584 aa).

Residues 300–379 adopt a coiled-coil conformation; sequence RKFQAWDRAK…EAEEEKRKKQ (80 aa). Residues 692-706 show a composition bias toward polar residues; it reads SEQQLEGTESSQADM. Residues 692 to 739 are disordered; the sequence is SEQQLEGTESSQADMQSRKELEKLDKEQEEEQPAEPERLTTVIPPSEE. The segment covering 707–717 has biased composition (basic and acidic residues); it reads QSRKELEKLDK.

The protein belongs to the CFAP74 family.

Its subcellular location is the cytoplasm. The protein resides in the cytoskeleton. The protein localises to the cilium axoneme. It localises to the flagellum axoneme. Functionally, as part of the central apparatus of the cilium axoneme may play a role in cilium movement. May play an important role in sperm architecture and function. The protein is Cilia- and flagella-associated protein 74 of Homo sapiens (Human).